We begin with the raw amino-acid sequence, 228 residues long: Ephrin-A5 (228 aa).

Residues 1–20 form the signal peptide; that stretch reads MLHVEMLTLVFLVLWMCVFS. The 134-residue stretch at 29-162 folds into the Ephrin RBD domain; the sequence is ADRYAVYWNS…KLKVFVRPTN (134 aa). Residue N37 is glycosylated (N-linked (GlcNAc...) asparagine). 2 cysteine pairs are disulfide-bonded: C62/C102 and C90/C151. A disordered region spans residues 186–205; that stretch reads EPADDTVHESAEPSRGENAA. Basic and acidic residues predominate over residues 190–200; the sequence is DTVHESAEPSR. N203 carries GPI-anchor amidated asparagine lipidation. The propeptide at 204–228 is removed in mature form; that stretch reads AAQTPRIPSRLLAILLFLLAMLLTL.

The protein belongs to the ephrin family. As to quaternary structure, binds to EPHB2. Interacts with EPHA8; activates EPHA8. Binds to the receptor tyrosine kinases EPHA2, EPHA3 and EPHB1. Forms a ternary EFNA5-EPHA3-ADAM10 complex mediating EFNA5 extracellular domain shedding by ADAM10 which regulates the EFNA5-EPHA3 complex internalization and function.

It is found in the cell membrane. It localises to the membrane. Its subcellular location is the caveola. Cell surface GPI-bound ligand for Eph receptors, a family of receptor tyrosine kinases which are crucial for migration, repulsion and adhesion during neuronal, vascular and epithelial development. Binds promiscuously Eph receptors residing on adjacent cells, leading to contact-dependent bidirectional signaling into neighboring cells. The signaling pathway downstream of the receptor is referred to as forward signaling while the signaling pathway downstream of the ephrin ligand is referred to as reverse signaling. Induces compartmentalized signaling within a caveolae-like membrane microdomain when bound to the extracellular domain of its cognate receptor. This signaling event requires the activity of the Fyn tyrosine kinase. Activates the EPHA3 receptor to regulate cell-cell adhesion and cytoskeletal organization. With the receptor EPHA2 may regulate lens fiber cells shape and interactions and be important for lens transparency maintenance. May function actively to stimulate axon fasciculation. The interaction of EFNA5 with EPHA5 also mediates communication between pancreatic islet cells to regulate glucose-stimulated insulin secretion. Cognate/functional ligand for EPHA7, their interaction regulates brain development modulating cell-cell adhesion and repulsion. The polypeptide is Ephrin-A5 (EFNA5) (Homo sapiens (Human)).